The sequence spans 402 residues: CCA-adding enzyme (402 aa).

2 residues coordinate ATP: Gly32 and Arg35. Gly32 and Arg35 together coordinate CTP. Mg(2+)-binding residues include Asp45 and Asp47. ATP-binding residues include Arg116, Asp159, Arg162, Arg165, and Arg168. CTP is bound by residues Arg116, Asp159, Arg162, Arg165, and Arg168.

It belongs to the tRNA nucleotidyltransferase/poly(A) polymerase family. Bacterial CCA-adding enzyme type 3 subfamily. As to quaternary structure, homodimer. The cofactor is Mg(2+).

The catalysed reaction is a tRNA precursor + 2 CTP + ATP = a tRNA with a 3' CCA end + 3 diphosphate. It catalyses the reaction a tRNA with a 3' CCA end + 2 CTP + ATP = a tRNA with a 3' CCACCA end + 3 diphosphate. In terms of biological role, catalyzes the addition and repair of the essential 3'-terminal CCA sequence in tRNAs without using a nucleic acid template. Adds these three nucleotides in the order of C, C, and A to the tRNA nucleotide-73, using CTP and ATP as substrates and producing inorganic pyrophosphate. tRNA 3'-terminal CCA addition is required both for tRNA processing and repair. Also involved in tRNA surveillance by mediating tandem CCA addition to generate a CCACCA at the 3' terminus of unstable tRNAs. While stable tRNAs receive only 3'-terminal CCA, unstable tRNAs are marked with CCACCA and rapidly degraded. This is CCA-adding enzyme from Streptococcus pyogenes serotype M2 (strain MGAS10270).